The following is a 403-amino-acid chain: Phosphopentomutase (403 aa).

Mn(2+) contacts are provided by Asp13, Asp298, His303, Asp339, His340, and His351.

Belongs to the phosphopentomutase family. Mn(2+) is required as a cofactor.

The protein localises to the cytoplasm. The catalysed reaction is 2-deoxy-alpha-D-ribose 1-phosphate = 2-deoxy-D-ribose 5-phosphate. It catalyses the reaction alpha-D-ribose 1-phosphate = D-ribose 5-phosphate. It participates in carbohydrate degradation; 2-deoxy-D-ribose 1-phosphate degradation; D-glyceraldehyde 3-phosphate and acetaldehyde from 2-deoxy-alpha-D-ribose 1-phosphate: step 1/2. Its function is as follows. Isomerase that catalyzes the conversion of deoxy-ribose 1-phosphate (dRib-1-P) and ribose 1-phosphate (Rib-1-P) to deoxy-ribose 5-phosphate (dRib-5-P) and ribose 5-phosphate (Rib-5-P), respectively. This is Phosphopentomutase from Streptococcus pyogenes serotype M5 (strain Manfredo).